The primary structure comprises 77 residues: MPKRVLQGVVISSKTDKTVTVKVERKFKHPIYKKFVKVSKKYAAHDIENKYKEGDKVSIVESRPISKTKTWVVLNLE.

It belongs to the universal ribosomal protein uS17 family. As to quaternary structure, part of the 30S ribosomal subunit.

Functionally, one of the primary rRNA binding proteins, it binds specifically to the 5'-end of 16S ribosomal RNA. This chain is Small ribosomal subunit protein uS17, found in Rickettsia prowazekii (strain Madrid E).